Reading from the N-terminus, the 467-residue chain is MTARTLYDKIWDAHLAHEAEDGTCLLYIDRHLVHEVTSPQAFEGLRMAGRTVRAPDKTIAVPDHNVPTTLGRENPDQMTEDSRIQVEALDKNAKDFGIHYYPVSDIRQGIVHIVGPEQGWTLPGMTVVCGDSHTATHGAFGALAHGIGTSEVEHVLATQTLIQKKSKNMKVEITGKLRPGVTAKDITLSVIGATGTAGGTGYVIEYCGEAIRDLSMEGRMTVCNMAIEGGARAGLIAPDEKTYEYVQGRPHAPKGAQWEAALAWWKTLYSDDDAHWDKVVTIKGEDIAPVVTWGTSPEDVLPISAMVPAPEDFTGGKVDAARRSLDYMGLTPGTPLSEIEIDTVFIGSCTNGRIEDLRAAAEILKGKKIAVKRAMVVPGSGLVRAQAEEEGLADIFKQAGFEWRMAGCSMCLAMNPDQLSEGERCASTSNRNFEGRQGYKGRTHLVSPAMAAAAAVTGKLTDVRDLM.

3 residues coordinate [4Fe-4S] cluster: Cys349, Cys408, and Cys411.

This sequence belongs to the aconitase/IPM isomerase family. LeuC type 1 subfamily. As to quaternary structure, heterodimer of LeuC and LeuD. Requires [4Fe-4S] cluster as cofactor.

The catalysed reaction is (2R,3S)-3-isopropylmalate = (2S)-2-isopropylmalate. It participates in amino-acid biosynthesis; L-leucine biosynthesis; L-leucine from 3-methyl-2-oxobutanoate: step 2/4. Catalyzes the isomerization between 2-isopropylmalate and 3-isopropylmalate, via the formation of 2-isopropylmaleate. This chain is 3-isopropylmalate dehydratase large subunit, found in Dinoroseobacter shibae (strain DSM 16493 / NCIMB 14021 / DFL 12).